Here is a 180-residue protein sequence, read N- to C-terminus: Adenine phosphoribosyltransferase (180 aa).

Belongs to the purine/pyrimidine phosphoribosyltransferase family. In terms of assembly, homodimer.

Its subcellular location is the cytoplasm. It catalyses the reaction AMP + diphosphate = 5-phospho-alpha-D-ribose 1-diphosphate + adenine. It functions in the pathway purine metabolism; AMP biosynthesis via salvage pathway; AMP from adenine: step 1/1. Its function is as follows. Catalyzes a salvage reaction resulting in the formation of AMP, that is energically less costly than de novo synthesis. This Haemophilus influenzae (strain PittEE) protein is Adenine phosphoribosyltransferase.